The following is a 178-amino-acid chain: ATP synthase subunit delta (178 aa).

Belongs to the ATPase delta chain family. In terms of assembly, F-type ATPases have 2 components, F(1) - the catalytic core - and F(0) - the membrane proton channel. F(1) has five subunits: alpha(3), beta(3), gamma(1), delta(1), epsilon(1). F(0) has three main subunits: a(1), b(2) and c(10-14). The alpha and beta chains form an alternating ring which encloses part of the gamma chain. F(1) is attached to F(0) by a central stalk formed by the gamma and epsilon chains, while a peripheral stalk is formed by the delta and b chains.

Its subcellular location is the cell inner membrane. Its function is as follows. F(1)F(0) ATP synthase produces ATP from ADP in the presence of a proton or sodium gradient. F-type ATPases consist of two structural domains, F(1) containing the extramembraneous catalytic core and F(0) containing the membrane proton channel, linked together by a central stalk and a peripheral stalk. During catalysis, ATP synthesis in the catalytic domain of F(1) is coupled via a rotary mechanism of the central stalk subunits to proton translocation. Functionally, this protein is part of the stalk that links CF(0) to CF(1). It either transmits conformational changes from CF(0) to CF(1) or is implicated in proton conduction. In Nitrosospira multiformis (strain ATCC 25196 / NCIMB 11849 / C 71), this protein is ATP synthase subunit delta.